We begin with the raw amino-acid sequence, 1126 residues long: Protein translocase subunit SecA (1126 aa).

ATP is bound by residues Gln-175, 193–197 (GEGKT), and Asp-694. The segment at 1060–1126 (VQEAAPEKHE…KYKNCHGQGL (67 aa)) is disordered. Basic and acidic residues predominate over residues 1064 to 1080 (APEKHEDMSRYRTEKTD). Cys-1110, Cys-1112, Cys-1121, and His-1122 together coordinate Zn(2+).

Belongs to the SecA family. Monomer and homodimer. Part of the essential Sec protein translocation apparatus which comprises SecA, SecYEG and auxiliary proteins SecDF. Other proteins may also be involved. Zn(2+) is required as a cofactor.

Its subcellular location is the cell inner membrane. The protein resides in the cytoplasm. It carries out the reaction ATP + H2O + cellular proteinSide 1 = ADP + phosphate + cellular proteinSide 2.. In terms of biological role, part of the Sec protein translocase complex. Interacts with the SecYEG preprotein conducting channel. Has a central role in coupling the hydrolysis of ATP to the transfer of proteins into and across the cell membrane, serving as an ATP-driven molecular motor driving the stepwise translocation of polypeptide chains across the membrane. The sequence is that of Protein translocase subunit SecA from Parabacteroides distasonis (strain ATCC 8503 / DSM 20701 / CIP 104284 / JCM 5825 / NCTC 11152).